The following is a 311-amino-acid chain: Olfactory receptor 10G4 (311 aa).

The Extracellular segment spans residues Met1–Ala23. N-linked (GlcNAc...) asparagine glycosylation occurs at Asn3. Residues Leu24 to Leu44 traverse the membrane as a helical segment. At Leu45–His52 the chain is on the cytoplasmic side. A helical transmembrane segment spans residues Leu53–Thr73. Residues Val74–Ala98 lie on the Extracellular side of the membrane. Cys96 and Cys188 are oxidised to a cystine. Residues Gln99–Tyr119 form a helical membrane-spanning segment. Residues Asp120 to Ser138 lie on the Cytoplasmic side of the membrane. Residues Arg139–Thr159 traverse the membrane as a helical segment. The Extracellular portion of the chain corresponds to Ile160–Met196. The helical transmembrane segment at Val197–Ser216 threads the bilayer. The Cytoplasmic portion of the chain corresponds to Tyr217–Ala236. Residues Phe237–Ile257 traverse the membrane as a helical segment. Residues Tyr258–Asp268 are Extracellular-facing. A helical membrane pass occupies residues Gly269–Leu289. At Arg290–Lys311 the chain is on the cytoplasmic side.

Belongs to the G-protein coupled receptor 1 family.

Its subcellular location is the cell membrane. In terms of biological role, odorant receptor. The polypeptide is Olfactory receptor 10G4 (OR10G4) (Homo sapiens (Human)).